The following is a 310-amino-acid chain: NADH-cytochrome b5 reductase 1 (310 aa).

The chain crosses the membrane as a helical span at residues 30–50; the sequence is WVPFAVALAAGFVAWKLSVGG. In terms of domain architecture, FAD-binding FR-type spans 61 to 166; that stretch reads NEFQNFVLKE…RGPKGAMVYT (106 aa). FAD contacts are provided by residues 146–160 and 172–209; these read TTLKVGDTMKVRGPK and HIGMIAGGTGITPMLQIIKAIIRNRPRNGGNDTTQVDL.

The protein belongs to the flavoprotein pyridine nucleotide cytochrome reductase family. Monomer. Component of the 2-(3-amino-3-carboxypropyl)histidine synthase complex composed of dph1, dph2, dph3 and a NADH-dependent reductase, predominantly cbr1. It depends on FAD as a cofactor.

It is found in the mitochondrion outer membrane. It carries out the reaction 2 Fe(III)-[cytochrome b5] + NADH = 2 Fe(II)-[cytochrome b5] + NAD(+) + H(+). It catalyses the reaction 2 Fe(3+)-[Dph3] + NADH = 2 Fe(2+)-[Dph3] + NAD(+) + H(+). It participates in protein modification; peptidyl-diphthamide biosynthesis. Functionally, NADH-dependent reductase for dph3 and cytochrome b5. Required for the first step of diphthamide biosynthesis, a post-translational modification of histidine which occurs in elongation factor 2. Dph1 and dph2 transfer a 3-amino-3-carboxypropyl (ACP) group from S-adenosyl-L-methionine (SAM) to a histidine residue, the reaction is assisted by a reduction system comprising dph3 and a NADH-dependent reductase, predominantly cbr1. By reducing dph3, also involved in the formation of the tRNA wobble base modification mcm5s 2U (5-methoxycarbonylmethyl-2-thiouridine), mediated by the elongator complex. The cytochrome b5/NADH cytochrome b5 reductase electron transfer system supports the catalytic activity of several sterol biosynthetic enzymes. This is NADH-cytochrome b5 reductase 1 (cbr1) from Emericella nidulans (strain FGSC A4 / ATCC 38163 / CBS 112.46 / NRRL 194 / M139) (Aspergillus nidulans).